Here is a 357-residue protein sequence, read N- to C-terminus: MRLVLLFVLLLPVCLATRFHQKGLFDFMIEDEGSADMAPTDDPVISGFGPVCPFRCQCHLRVVQCSDLGLERVPKDLPPDTTLLDLQNNKITEIKEGDFKNLKNLHALILVNNKISKISPAAFAPLKKLERLYLSKNNLKELPENMPKSLQEIRAHENEISKLRKAVFNGLNQVIVLELGTNPLKSSGIENGAFQGMKRLSYIRIADTNITSIPKGLPPSLTELHLDGNKISKIDAEGLSGLTNLAKLGLSFNSISSVENGSLNNVPHLRELHLNNNELVRVPSGLGEHKYIQVVYLHNNKIASIGINDFCPLGYNTKKATYSGVSLFSNPVQYWEIQPSAFRCIHERSAVQIGNYK.

Residues 1–16 (MRLVLLFVLLLPVCLA) form the signal peptide. A propeptide spanning residues 17-30 (TRFHQKGLFDFMIE) is cleaved from the precursor. An O-linked (Xyl...) (glycosaminoglycan) serine glycan is attached at Ser-46. Intrachain disulfides connect Cys-52–Cys-58 and Cys-56–Cys-65. LRR repeat units follow at residues 71–91 (ERVP…NNKI), 92–115 (TEIK…NNKI), 116–139 (SKIS…KNNL), 140–160 (KELP…ENEI), 161–184 (SKLR…TNPL), 185–210 (KSSG…DTNI), 211–231 (TSIP…GNKI), 232–255 (SKID…FNSI), 256–279 (SSVE…NNEL), 280–302 (VRVP…NNKI), 303–332 (ASIG…SNPV), and 333–357 (QYWE…GNYK). An N-linked (GlcNAc...) asparagine glycan is attached at Asn-209. The N-linked (GlcNAc...) asparagine glycan is linked to Asn-260. Residues Cys-311 and Cys-344 are joined by a disulfide bond.

It belongs to the small leucine-rich proteoglycan (SLRP) family. SLRP class I subfamily. In terms of assembly, binds to type I and type II collagen, to fibronectin and TGF-beta. Forms a ternary complex with MFAP2 and ELN. In terms of processing, the attached glycosaminoglycan chain can be either chondroitin sulfate or dermatan sulfate depending upon the tissue of origin.

It is found in the secreted. It localises to the extracellular space. Its subcellular location is the extracellular matrix. Functionally, may affect the rate of fibrils formation. In Gallus gallus (Chicken), this protein is Decorin (DCN).